The chain runs to 425 residues: Serine--tRNA ligase (425 aa).

233–235 is a binding site for L-serine; sequence TAE. 264 to 266 provides a ligand contact to ATP; that stretch reads RRE. Glutamate 287 is a binding site for L-serine. Residue 351-354 coordinates ATP; that stretch reads EISS. Serine 387 is an L-serine binding site.

This sequence belongs to the class-II aminoacyl-tRNA synthetase family. Type-1 seryl-tRNA synthetase subfamily. As to quaternary structure, homodimer. The tRNA molecule binds across the dimer.

It localises to the cytoplasm. The enzyme catalyses tRNA(Ser) + L-serine + ATP = L-seryl-tRNA(Ser) + AMP + diphosphate + H(+). It carries out the reaction tRNA(Sec) + L-serine + ATP = L-seryl-tRNA(Sec) + AMP + diphosphate + H(+). The protein operates within aminoacyl-tRNA biosynthesis; selenocysteinyl-tRNA(Sec) biosynthesis; L-seryl-tRNA(Sec) from L-serine and tRNA(Sec): step 1/1. Catalyzes the attachment of serine to tRNA(Ser). Is also able to aminoacylate tRNA(Sec) with serine, to form the misacylated tRNA L-seryl-tRNA(Sec), which will be further converted into selenocysteinyl-tRNA(Sec). This chain is Serine--tRNA ligase, found in Thermotoga sp. (strain RQ2).